Here is a 216-residue protein sequence, read N- to C-terminus: Transmembrane protein 139 (216 aa).

The N-terminal stretch at 1–25 (MVPMHLLGRLEKPLLLLCCASFLLG) is a signal peptide. Over 26-34 (LALLGIKTD) the chain is Extracellular. The chain crosses the membrane as a helical span at residues 35–55 (ITPVAYFFLTLGGFFLFAYLL). Over 56 to 216 (VRFLEWGLRS…VFYEDNWAPP (161 aa)) the chain is Cytoplasmic. The tract at residues 104 to 163 (RPQELDQPPPYSTVVIPPAPEEEQPSHPEGSRRAKLEQRRMASEGSMAQEGSPGRAPINL) is disordered. Positions 127–145 (QPSHPEGSRRAKLEQRRMA) are enriched in basic and acidic residues. Residues S146 and S155 each carry the phosphoserine modification.

Interacts with isoform 2 of SLC4A1.

Its subcellular location is the membrane. Functionally, may be involved in cellular trafficking of proteins such as SLC4A1. The polypeptide is Transmembrane protein 139 (TMEM139) (Homo sapiens (Human)).